The sequence spans 203 residues: Protein GrpE (203 aa).

Residues 1–38 form a disordered region; the sequence is MTQDQTAEQMPAAESADQSADQGPAAESAAPPAVDSER.

Belongs to the GrpE family. As to quaternary structure, homodimer.

It is found in the cytoplasm. Functionally, participates actively in the response to hyperosmotic and heat shock by preventing the aggregation of stress-denatured proteins, in association with DnaK and GrpE. It is the nucleotide exchange factor for DnaK and may function as a thermosensor. Unfolded proteins bind initially to DnaJ; upon interaction with the DnaJ-bound protein, DnaK hydrolyzes its bound ATP, resulting in the formation of a stable complex. GrpE releases ADP from DnaK; ATP binding to DnaK triggers the release of the substrate protein, thus completing the reaction cycle. Several rounds of ATP-dependent interactions between DnaJ, DnaK and GrpE are required for fully efficient folding. The sequence is that of Protein GrpE from Paramagnetospirillum magneticum (strain ATCC 700264 / AMB-1) (Magnetospirillum magneticum).